Here is a 167-residue protein sequence, read N- to C-terminus: Methyl-coenzyme M reductase II operon protein D (167 aa).

In terms of assembly, MCR is composed of three subunits: alpha, beta, and gamma. The function of protein D is not known.

This chain is Methyl-coenzyme M reductase II operon protein D (mrtD), found in Methanocaldococcus jannaschii (strain ATCC 43067 / DSM 2661 / JAL-1 / JCM 10045 / NBRC 100440) (Methanococcus jannaschii).